We begin with the raw amino-acid sequence, 333 residues long: Probable malate dehydrogenase 3 (333 aa).

Residue G12 to A18 coordinates NAD(+). R93 and R99 together coordinate substrate. Residues N106, Q113, and V130–N132 contribute to the NAD(+) site. N132 and R163 together coordinate substrate. The active-site Proton acceptor is H188.

It belongs to the LDH/MDH superfamily. MDH type 2 family. As to quaternary structure, homodimer.

The enzyme catalyses (S)-malate + NAD(+) = oxaloacetate + NADH + H(+). Catalyzes the reversible oxidation of malate to oxaloacetate. The polypeptide is Probable malate dehydrogenase 3 (mdhC) (Dictyostelium discoideum (Social amoeba)).